The following is a 126-amino-acid chain: Protein ApaG (126 aa).

The region spanning 2-126 is the ApaG domain; that stretch reads SDPRYQIDVS…FRLAVPGALH (125 aa).

The chain is Protein ApaG from Pseudomonas fluorescens (strain SBW25).